We begin with the raw amino-acid sequence, 816 residues long: H(+)/Cl(-) exchange transporter 5 (816 aa).

The disordered stretch occupies residues 1-26 (MAMWQGAMDNRGFQQGSFSSFQNSSS). Residues 1–124 (MAMWQGAMDN…WALIHSVSDA (124 aa)) lie on the Cytoplasmic side of the membrane. Residues 12-25 (GFQQGSFSSFQNSS) are compositionally biased toward low complexity. 2 helical membrane passes run 125 to 162 (FSGW…ICTG) and 208 to 231 (VNYF…VKVF). The short motif at 237–241 (GSGIP) is the Selectivity filter part_1 element. S238 contributes to the chloride binding site. Positions 240–247 (IPEIKTIL) form an intramembrane region, helical. 2 consecutive transmembrane segments (helical) span residues 256-275 (LGKW…VSSG) and 281-300 (EGPL…HCFN). Residues 279–283 (GKEGP) carry the Selectivity filter part_2 motif. Intramembrane regions (helical) lie at residues 312-324 (VLSA…VSVA) and 328-336 (PIGGVLFSL). The next 5 membrane-spanning stretches (helical) occupy residues 348 to 366 (LWRS…RSIN), 389 to 415 (LVPF…AWCR), 422 to 442 (LGKY…ILAF), 498 to 518 (MWQL…TFGM), and 523 to 542 (GLFI…LGVG). Residues 523–527 (GLFIP) carry the Selectivity filter part_3 motif. F525 serves as a coordination point for chloride. Positions 570-584 (GLYAMVGAAACLGGV) form an intramembrane region, helical. Residues 585–587 (TRM) constitute an intramembrane region (note=Loop between two helices). Positions 588 to 599 (TVSLVVIMFELT) form an intramembrane region, helical. The note=Loop between two helices intramembrane region spans 600 to 604 (GGLEY). A helical transmembrane segment spans residues 605–622 (IVPLMAAAMTSKWVADAL). Over 623–816 (GREGIYDAHI…NQDPDSILFN (194 aa)) the chain is Cytoplasmic. Y628 serves as a coordination point for chloride. CBS domains follow at residues 656–720 (MKPR…ARKK) and 752–812 (ILDL…DPDS). ATP-binding positions include T666, 687–689 (YSG), and 794–797 (TKKD).

It belongs to the chloride channel (TC 2.A.49) family. ClC-5/CLCN5 subfamily. Interacts with NEDD4 and NEDD4L. In terms of processing, ubiquitinated by NEDD4L in the presence of albumin; which promotes endocytosis and proteasomal degradation. Kidney. Moderately expressed in aortic vascular smooth muscle and endothelial cells, and at a slightly higher level in the coronary vascular smooth muscle.

It localises to the golgi apparatus membrane. It is found in the endosome membrane. The protein localises to the cell membrane. It carries out the reaction 2 chloride(in) + H(+)(out) = 2 chloride(out) + H(+)(in). Functionally, proton-coupled chloride transporter. Functions as antiport system and exchanges chloride ions against protons. Important for normal acidification of the endosome lumen. May play an important role in renal tubular function. The CLC channel family contains both chloride channels and proton-coupled anion transporters that exchange chloride or another anion for protons. The absence of conserved gating glutamate residues is typical for family members that function as channels. The protein is H(+)/Cl(-) exchange transporter 5 of Homo sapiens (Human).